A 126-amino-acid chain; its full sequence is Large ribosomal subunit protein bL12 (126 aa).

This sequence belongs to the bacterial ribosomal protein bL12 family. In terms of assembly, homodimer. Part of the ribosomal stalk of the 50S ribosomal subunit. Forms a multimeric L10(L12)X complex, where L10 forms an elongated spine to which 2 to 4 L12 dimers bind in a sequential fashion. Binds GTP-bound translation factors.

Its function is as follows. Forms part of the ribosomal stalk which helps the ribosome interact with GTP-bound translation factors. Is thus essential for accurate translation. The chain is Large ribosomal subunit protein bL12 from Corynebacterium diphtheriae (strain ATCC 700971 / NCTC 13129 / Biotype gravis).